The sequence spans 137 residues: ATP synthase epsilon chain, chloroplastic (137 aa).

Belongs to the ATPase epsilon chain family. F-type ATPases have 2 components, CF(1) - the catalytic core - and CF(0) - the membrane proton channel. CF(1) has five subunits: alpha(3), beta(3), gamma(1), delta(1), epsilon(1). CF(0) has three main subunits: a, b and c.

It is found in the plastid. Its subcellular location is the chloroplast thylakoid membrane. Its function is as follows. Produces ATP from ADP in the presence of a proton gradient across the membrane. This Agrostis stolonifera (Creeping bentgrass) protein is ATP synthase epsilon chain, chloroplastic.